Here is a 145-residue protein sequence, read N- to C-terminus: MYPAHLLVLLAVCVSLLGASDIPPQPLNLVQFSNMIQCANHGRRPTSNYMDYGCYCGKGGSGTPVDELDRCCKIHDDCYGEAEKSQKCAPYWTWYTWKCGSDGPQCDDSKTGCQRFVCDCDATAAKCFAKAPYNKENYNIKTRCQ.

The signal sequence occupies residues 1–19; sequence MYPAHLLVLLAVCVSLLGA. Residues 20-27 constitute a propeptide that is removed on maturation; the sequence is SDIPPQPL. 7 disulfide bridges follow: Cys-38–Cys-99, Cys-54–Cys-144, Cys-56–Cys-72, Cys-71–Cys-127, Cys-78–Cys-120, Cys-88–Cys-113, and Cys-106–Cys-118. 3 residues coordinate Ca(2+): Tyr-55, Gly-57, and Gly-59. Residue His-75 is part of the active site. Asp-76 is a binding site for Ca(2+). Residue Asp-121 is part of the active site.

The protein belongs to the phospholipase A2 family. Group I subfamily. D49 sub-subfamily. It depends on Ca(2+) as a cofactor. As to expression, expressed by the venom gland.

It localises to the secreted. The catalysed reaction is a 1,2-diacyl-sn-glycero-3-phosphocholine + H2O = a 1-acyl-sn-glycero-3-phosphocholine + a fatty acid + H(+). Snake venom phospholipase A2 (PLA2) that inhibits collagen-induced platelet aggregation. PLA2 catalyzes the calcium-dependent hydrolysis of the 2-acyl groups in 3-sn-phosphoglycerides. This chain is Basic phospholipase A2 S2-22, found in Austrelaps superbus (Lowland copperhead snake).